The primary structure comprises 221 residues: Adenylate kinase (221 aa).

10-15 lines the ATP pocket; it reads GAGKGT. Residues 30 to 59 form an NMP region; it reads STGDMLRAAVKAGTPLGLEAKRFMDAGELV. Residues Thr31, Arg36, 57–59, 85–88, and Gln92 each bind AMP; these read ELV and GFPR. The interval 122-159 is LID; the sequence is GRRSHAASGRTYHVKFNPPKVEGVDDMTGEPLIQRDDD. ATP-binding positions include Arg123 and 132–133; that span reads TY. Residues Arg156 and Arg167 each coordinate AMP. Residue Gly207 coordinates ATP.

Belongs to the adenylate kinase family. In terms of assembly, monomer.

The protein resides in the cytoplasm. It carries out the reaction AMP + ATP = 2 ADP. The protein operates within purine metabolism; AMP biosynthesis via salvage pathway; AMP from ADP: step 1/1. In terms of biological role, catalyzes the reversible transfer of the terminal phosphate group between ATP and AMP. Plays an important role in cellular energy homeostasis and in adenine nucleotide metabolism. The sequence is that of Adenylate kinase from Paraburkholderia phytofirmans (strain DSM 17436 / LMG 22146 / PsJN) (Burkholderia phytofirmans).